The primary structure comprises 257 residues: Thiazole synthase (257 aa).

Lys95 (schiff-base intermediate with DXP) is an active-site residue. 1-deoxy-D-xylulose 5-phosphate-binding positions include Gly156, 182 to 183 (AG), and 204 to 205 (NT).

It belongs to the ThiG family. Homotetramer. Forms heterodimers with either ThiH or ThiS.

The protein localises to the cytoplasm. The catalysed reaction is [ThiS sulfur-carrier protein]-C-terminal-Gly-aminoethanethioate + 2-iminoacetate + 1-deoxy-D-xylulose 5-phosphate = [ThiS sulfur-carrier protein]-C-terminal Gly-Gly + 2-[(2R,5Z)-2-carboxy-4-methylthiazol-5(2H)-ylidene]ethyl phosphate + 2 H2O + H(+). Its pathway is cofactor biosynthesis; thiamine diphosphate biosynthesis. Functionally, catalyzes the rearrangement of 1-deoxy-D-xylulose 5-phosphate (DXP) to produce the thiazole phosphate moiety of thiamine. Sulfur is provided by the thiocarboxylate moiety of the carrier protein ThiS. In vitro, sulfur can be provided by H(2)S. The sequence is that of Thiazole synthase from Fusobacterium nucleatum subsp. nucleatum (strain ATCC 25586 / DSM 15643 / BCRC 10681 / CIP 101130 / JCM 8532 / KCTC 2640 / LMG 13131 / VPI 4355).